Here is a 409-residue protein sequence, read N- to C-terminus: Serine/threonine transporter SstT (409 aa).

Helical transmembrane passes span 17–37, 49–69, 83–103, 142–162, 180–200, 218–238, 301–321, 331–351, and 357–377; these read LVGQIIVGLIAGLLLASFFPA, FVSALKAVAPVLVFVLVMASI, ILLLYLVGTFSAAVVAVIASF, ALISANFIGILAWAIGLGIAF, VSLIVKVVIRFAPLGIFGLVA, LVVLLGCMLFVAFVVNPLIVF, GAAITITVLTLAAVHTLGIAV, VVASICACGASGVAGGSLLLI, and LFGIPSEVAMQVVAVGFIIAI.

Belongs to the dicarboxylate/amino acid:cation symporter (DAACS) (TC 2.A.23) family.

Its subcellular location is the cell inner membrane. The catalysed reaction is L-serine(in) + Na(+)(in) = L-serine(out) + Na(+)(out). The enzyme catalyses L-threonine(in) + Na(+)(in) = L-threonine(out) + Na(+)(out). Functionally, involved in the import of serine and threonine into the cell, with the concomitant import of sodium (symport system). In Pseudomonas aeruginosa (strain LESB58), this protein is Serine/threonine transporter SstT.